The chain runs to 78 residues: Translation initiation factor IF-1, chloroplastic (78 aa).

One can recognise an S1-like domain in the interval 1–73 (MASNRELIEM…TKGRIIYRLR (73 aa)).

The protein belongs to the IF-1 family. In terms of assembly, component of the 30S ribosomal translation pre-initiation complex which assembles on the 30S ribosome in the order IF-2 and IF-3, IF-1 and N-formylmethionyl-tRNA(fMet); mRNA recruitment can occur at any time during PIC assembly.

It localises to the plastid. The protein resides in the chloroplast. In terms of biological role, one of the essential components for the initiation of protein synthesis. Stabilizes the binding of IF-2 and IF-3 on the 30S subunit to which N-formylmethionyl-tRNA(fMet) subsequently binds. Helps modulate mRNA selection, yielding the 30S pre-initiation complex (PIC). Upon addition of the 50S ribosomal subunit IF-1, IF-2 and IF-3 are released leaving the mature 70S translation initiation complex. This Ostreococcus tauri protein is Translation initiation factor IF-1, chloroplastic.